The sequence spans 355 residues: Uroporphyrinogen decarboxylase (355 aa).

Residues 27-31 (RQAGR), Asp77, Tyr154, Thr209, and His328 contribute to the substrate site.

This sequence belongs to the uroporphyrinogen decarboxylase family. Homodimer.

It localises to the cytoplasm. The catalysed reaction is uroporphyrinogen III + 4 H(+) = coproporphyrinogen III + 4 CO2. It functions in the pathway porphyrin-containing compound metabolism; protoporphyrin-IX biosynthesis; coproporphyrinogen-III from 5-aminolevulinate: step 4/4. Catalyzes the decarboxylation of four acetate groups of uroporphyrinogen-III to yield coproporphyrinogen-III. The polypeptide is Uroporphyrinogen decarboxylase (Dechloromonas aromatica (strain RCB)).